The primary structure comprises 273 residues: Tryptase (273 aa).

An N-terminal signal peptide occupies residues 1-18 (MLKLLLLTLPLLSSLVHA). A propeptide spans 19–28 (APGPAMTREG) (activation peptide). The 242-residue stretch at 29 to 270 (IVGGQEAHGN…YLDWIHHYVP (242 aa)) folds into the Peptidase S1 domain. The N-linked (GlcNAc...) asparagine glycan is linked to asparagine 49. An intrachain disulfide couples cysteine 57 to cysteine 73. Catalysis depends on charge relay system residues histidine 72 and aspartate 119. N-linked (GlcNAc...) asparagine glycosylation occurs at asparagine 130. 3 cysteine pairs are disulfide-bonded: cysteine 153–cysteine 228, cysteine 186–cysteine 209, and cysteine 218–cysteine 246. The Charge relay system role is filled by serine 222.

It belongs to the peptidase S1 family. Tryptase subfamily.

The catalysed reaction is Preferential cleavage: Arg-|-Xaa, Lys-|-Xaa, but with more restricted specificity than trypsin.. In terms of biological role, tryptase is the major neutral protease present in mast cells and is secreted upon the coupled activation-degranulation response of this cell type. May play a role in innate immunity. The sequence is that of Tryptase (Tpsab1) from Mus musculus (Mouse).